Reading from the N-terminus, the 243-residue chain is Homeobox protein goosecoid isoform B (243 aa).

Residues 148-207 (KRRHRTIFTDEQLEALENLFQETKYPDVGTREQLARRVHLREEKVEVWFKNRRAKWRRQK) constitute a DNA-binding region (homeobox). Residues 201 to 243 (AKWRRQKRSSSEESENAQKWNKSSKNSAEKRDEQAKSDLDSDS) are disordered. Residues 217–226 (AQKWNKSSKN) are compositionally biased toward polar residues. The span at 227 to 243 (SAEKRDEQAKSDLDSDS) shows a compositional bias: basic and acidic residues.

It belongs to the paired homeobox family. Bicoid subfamily.

It localises to the nucleus. Functionally, plays a central role in executing Spemann's organizer phenomenon (the dorsal blastopore lip of the early Xenopus laevis gastrula can organize a complete secondary body axis when transplanted to another embryo). The chain is Homeobox protein goosecoid isoform B (gsc-b) from Xenopus laevis (African clawed frog).